The chain runs to 149 residues: Pleckstrin homology domain-containing family J member 1 (149 aa).

The region spanning 15–108 (PAEMAAELGM…WMAALRQASY (94 aa)) is the PH domain.

The sequence is that of Pleckstrin homology domain-containing family J member 1 (PLEKHJ1) from Bos taurus (Bovine).